The sequence spans 392 residues: DNA-directed RNA polymerase subunit Rpo1C (392 aa).

It belongs to the RNA polymerase beta' chain family. As to quaternary structure, part of the RNA polymerase complex.

It localises to the cytoplasm. It catalyses the reaction RNA(n) + a ribonucleoside 5'-triphosphate = RNA(n+1) + diphosphate. In terms of biological role, DNA-dependent RNA polymerase (RNAP) catalyzes the transcription of DNA into RNA using the four ribonucleoside triphosphates as substrates. Forms part of the jaw domain. The sequence is that of DNA-directed RNA polymerase subunit Rpo1C from Sulfurisphaera tokodaii (strain DSM 16993 / JCM 10545 / NBRC 100140 / 7) (Sulfolobus tokodaii).